The following is a 284-amino-acid chain: Tryptophan synthase alpha chain (284 aa).

Residues E59 and D70 each act as proton acceptor in the active site.

Belongs to the TrpA family. As to quaternary structure, tetramer of two alpha and two beta chains.

The catalysed reaction is (1S,2R)-1-C-(indol-3-yl)glycerol 3-phosphate + L-serine = D-glyceraldehyde 3-phosphate + L-tryptophan + H2O. The protein operates within amino-acid biosynthesis; L-tryptophan biosynthesis; L-tryptophan from chorismate: step 5/5. Its function is as follows. The alpha subunit is responsible for the aldol cleavage of indoleglycerol phosphate to indole and glyceraldehyde 3-phosphate. This Azospirillum brasilense protein is Tryptophan synthase alpha chain.